Consider the following 111-residue polypeptide: MLFNTFVVTALASLAAATPTRRNEPAAGSCSTGELQCCKSVQSADSKSLTSLFGLLGLVVGDITGLVGVTCSPVTVVGAGGAQCNAQAVCCNDNSFNGLIALGCTPINLNL.

Residues 1–17 form the signal peptide; sequence MLFNTFVVTALASLAAA. Cystine bridges form between Cys-30–Cys-90, Cys-37–Cys-84, Cys-38–Cys-71, and Cys-91–Cys-104.

It belongs to the fungal hydrophobin family. As to quaternary structure, self-assembles to form functional amyloid fibrils called rodlets. Self-assembly into fibrillar rodlets occurs spontaneously at hydrophobic:hydrophilic interfaces and the rodlets further associate laterally to form amphipathic monolayers.

It localises to the secreted. The protein resides in the cell wall. Functionally, aerial growth, conidiation, and dispersal of filamentous fungi in the environment rely upon a capability of their secreting small amphipathic proteins called hydrophobins (HPBs) with low sequence identity. Class I can self-assemble into an outermost layer of rodlet bundles on aerial cell surfaces, conferring cellular hydrophobicity that supports fungal growth, development and dispersal; whereas Class II form highly ordered films at water-air interfaces through intermolecular interactions but contribute nothing to the rodlet structure. This is Class I hydrophobin 10 from Pleurotus ostreatus (strain PC15) (Oyster mushroom).